A 79-amino-acid chain; its full sequence is D-alanyl carrier protein (79 aa).

A Carrier domain is found at 1–77 (MDIKAEVIEI…KIVEGVTELR (77 aa)). Ser-35 is modified (O-(pantetheine 4'-phosphoryl)serine).

The protein belongs to the DltC family. Post-translationally, 4'-phosphopantetheine is transferred from CoA to a specific serine of apo-DCP.

The protein resides in the cytoplasm. The protein operates within cell wall biogenesis; lipoteichoic acid biosynthesis. Functionally, carrier protein involved in the D-alanylation of lipoteichoic acid (LTA). The loading of thioester-linked D-alanine onto DltC is catalyzed by D-alanine--D-alanyl carrier protein ligase DltA. The DltC-carried D-alanyl group is further transferred to cell membrane phosphatidylglycerol (PG) by forming an ester bond, probably catalyzed by DltD. D-alanylation of LTA plays an important role in modulating the properties of the cell wall in Gram-positive bacteria, influencing the net charge of the cell wall. In Streptococcus sanguinis (strain SK36), this protein is D-alanyl carrier protein.